We begin with the raw amino-acid sequence, 242 residues long: MSFRALTMRSAVARTALNNTIRSARVATPYLGIRHSSSTPTPDPKTKAASLIDALPGNTALTKTGILGTSAAAIIYGISNQLYVINDESILLLIFLGFSGLVAKFLAPLYKDFADARIKKIGSILNSSRERHVDAVKDRIESVSELQNVSETTKVLFDVSKETVELEAKAFELKQKVELAHEAKSVLDSWVRYEASLRQLQQKQIAEGIISKVESELTNPKFQDRVLQQSIAEVEQVLANIK.

The N-terminal 35 residues, 1 to 35 (MSFRALTMRSAVARTALNNTIRSARVATPYLGIRH), are a transit peptide targeting the mitochondrion.

This sequence belongs to the eukaryotic ATPase B chain family. In terms of assembly, F-type ATPases have 2 components, CF(1) - the catalytic core - and CF(0) - the membrane proton channel. In yeast, the dimeric form of ATP synthase consists of 17 polypeptides: alpha, beta, gamma, delta, epsilon, 4 (B), 5 (OSCP), 6 (A), 8, 9 (C), d, E (Tim11), f, g, h, i/j and k.

The protein localises to the mitochondrion. It localises to the mitochondrion inner membrane. Functionally, mitochondrial membrane ATP synthase (F(1)F(0) ATP synthase or Complex V) produces ATP from ADP in the presence of a proton gradient across the membrane which is generated by electron transport complexes of the respiratory chain. F-type ATPases consist of two structural domains, F(1) - containing the extramembraneous catalytic core, and F(0) - containing the membrane proton channel, linked together by a central stalk and a peripheral stalk. During catalysis, ATP synthesis in the catalytic domain of F(1) is coupled via a rotary mechanism of the central stalk subunits to proton translocation. Part of the complex F(0) domain and the peripheric stalk, which acts as a stator to hold the catalytic alpha(3)beta(3) subcomplex and subunit a/ATP6 static relative to the rotary elements. This chain is ATP synthase subunit 4, mitochondrial (ATP4), found in Candida glabrata (strain ATCC 2001 / BCRC 20586 / JCM 3761 / NBRC 0622 / NRRL Y-65 / CBS 138) (Yeast).